Reading from the N-terminus, the 98-residue chain is UPF0235 protein Asuc_1977 (98 aa).

This sequence belongs to the UPF0235 family.

In Actinobacillus succinogenes (strain ATCC 55618 / DSM 22257 / CCUG 43843 / 130Z), this protein is UPF0235 protein Asuc_1977.